A 225-amino-acid polypeptide reads, in one-letter code: Acidic leucine-rich nuclear phosphoprotein 32-related protein 2 (225 aa).

LRR repeat units lie at residues 39–60, 61–82, and 87–107; these read KLEL…PVLP, ALNY…DVLI, and EIKK…RTLK. An LRRCT domain is found at 121-161; that stretch reads SSLGLLDDYRVKMFEMIPSLKILDGCDVDGEEVEEEFAAGE. The span at 155–175 shows a compositional bias: acidic residues; it reads EEFAAGEGAEDSDEGDSDEDG. The interval 155-225 is disordered; the sequence is EEFAAGEGAE…DEPEAKKSAE (71 aa).

This sequence belongs to the ANP32 family.

This chain is Acidic leucine-rich nuclear phosphoprotein 32-related protein 2, found in Caenorhabditis elegans.